The chain runs to 596 residues: NADH-quinone oxidoreductase subunit C/D (596 aa).

The tract at residues 1-186 (MTDLTAQEPA…SPFELTKAKQ (186 aa)) is NADH dehydrogenase I subunit C. Residues 210–596 (DFMFLNLGPN…IDFVMSDVDR (387 aa)) form an NADH dehydrogenase I subunit D region.

This sequence in the N-terminal section; belongs to the complex I 30 kDa subunit family. It in the C-terminal section; belongs to the complex I 49 kDa subunit family. NDH-1 is composed of 13 different subunits. Subunits NuoB, CD, E, F, and G constitute the peripheral sector of the complex.

It is found in the cell inner membrane. The catalysed reaction is a quinone + NADH + 5 H(+)(in) = a quinol + NAD(+) + 4 H(+)(out). Its function is as follows. NDH-1 shuttles electrons from NADH, via FMN and iron-sulfur (Fe-S) centers, to quinones in the respiratory chain. The immediate electron acceptor for the enzyme in this species is believed to be ubiquinone. Couples the redox reaction to proton translocation (for every two electrons transferred, four hydrogen ions are translocated across the cytoplasmic membrane), and thus conserves the redox energy in a proton gradient. This chain is NADH-quinone oxidoreductase subunit C/D, found in Shigella flexneri serotype 5b (strain 8401).